A 251-amino-acid chain; its full sequence is uncharacterized protein (251 aa).

Belongs to the FAM243 family.

This is an uncharacterized protein from Homo sapiens (Human).